The sequence spans 358 residues: Ion-translocating oxidoreductase complex subunit D (358 aa).

A run of 3 helical transmembrane segments spans residues 24–44 (ILAM…GVVL), 79–99 (LTAL…IIII), and 125–145 (IGYV…MPPI). Residue Thr-186 is modified to FMN phosphoryl threonine. 5 helical membrane-spanning segments follow: residues 220 to 240 (FAQG…FLIL), 248 to 268 (IPVA…FTGF), 271 to 291 (LSAI…FIAT), 297 to 317 (SITP…VYLI), and 321 to 341 (GNYP…VPLI).

Belongs to the NqrB/RnfD family. The complex is composed of six subunits: RnfA, RnfB, RnfC, RnfD, RnfE and RnfG. It depends on FMN as a cofactor.

The protein resides in the cell inner membrane. Functionally, part of a membrane-bound complex that couples electron transfer with translocation of ions across the membrane. This chain is Ion-translocating oxidoreductase complex subunit D, found in Haemophilus influenzae (strain ATCC 51907 / DSM 11121 / KW20 / Rd).